Consider the following 721-residue polypeptide: Ribonucleoside-diphosphate reductase subunit alpha (721 aa).

Substrate is bound by residues T159, 175-176, G204, 384-388, and 589-593; these read SC, NLCSE, and PTGSI. Residues C176 and C413 are joined by a disulfide bond. The active-site Proton acceptor is N384. The Cysteine radical intermediate role is filled by C386. Catalysis depends on E388, which acts as the Proton acceptor.

This sequence belongs to the ribonucleoside diphosphate reductase large chain family. Tetramer of two alpha and two beta subunits.

The enzyme catalyses a 2'-deoxyribonucleoside 5'-diphosphate + [thioredoxin]-disulfide + H2O = a ribonucleoside 5'-diphosphate + [thioredoxin]-dithiol. Its activity is regulated as follows. Under complex allosteric control mediated by deoxynucleoside triphosphates and ATP binding. The type of nucleotide bound at the specificity site determines substrate preference. It seems probable that ATP makes the enzyme reduce CDP and UDP, dGTP favors ADP reduction and dTTP favors GDP reduction. Functionally, provides the precursors necessary for DNA synthesis. Catalyzes the biosynthesis of deoxyribonucleotides from the corresponding ribonucleotides. This Mycoplasma genitalium (strain ATCC 33530 / DSM 19775 / NCTC 10195 / G37) (Mycoplasmoides genitalium) protein is Ribonucleoside-diphosphate reductase subunit alpha (nrdE).